The primary structure comprises 253 residues: uncharacterized protein (253 aa).

This sequence belongs to the MG439/MG440 family.

This is an uncharacterized protein from Mycoplasma pneumoniae (strain ATCC 29342 / M129 / Subtype 1) (Mycoplasmoides pneumoniae).